The chain runs to 629 residues: Proteoglycan Cow (629 aa).

Positions 1–27 (MKHSPLIASACLALVLMSSSLIGSTEA) are cleaved as a signal peptide. Disordered stretches follow at residues 118–186 (KRRV…ESKE) and 198–223 (GDKQQQQQQLSQPAAGPSVIQQDDDE). A compositionally biased stretch (acidic residues) spans 128–143 (DSQDAEDINNDDEDNS). N142 is a glycosylation site (N-linked (GlcNAc...) asparagine). Residues 144-159 (SDGGSSNSSPTGTNNA) are compositionally biased toward low complexity. Acidic residues predominate over residues 167 to 186 (EETDDEDKSLSLGDDDESKE). One can recognise a Kazal-like domain in the interval 222–273 (DEELDNCKPCPVAKPTFLCGADNRTYSSLCRLDYHNCIHSTSIRIACKGFCP). 3 disulfides stabilise this stretch: C228–C258, C231–C251, and C240–C272. N244 carries N-linked (GlcNAc...) asparagine glycosylation. The disordered stretch occupies residues 298-356 (SLDQQQQQQQQQQQQQQQQQAYKDSNNNNIMMNSGNIMGGNNNDFNTIMNDKEDNNRHN). Low complexity predominate over residues 301-340 (QQQQQQQQQQQQQQQQQAYKDSNNNNIMMNSGNIMGGNNN). 2 EF-hand domains span residues 468–503 (ACKTEAKWMFGHLDLNNDGQLSLQEMYDLEHDQNER) and 508–535 (FIDTCDLDTDSSINTREWCRCFEKTDRP). The Ca(2+) site is built by D481, N483, D485, Q487, and E492. Residues 533 to 594 (DRPCAAVRRR…NTRTRGKPNC (62 aa)) enclose the Thyroglobulin type-1 domain. 3 disulfides stabilise this stretch: C536–C555, C566–C573, and C575–C594. The disordered stretch occupies residues 602 to 629 (ASLTSDDEDEGADDEDSAEGSADQMLVF). A compositionally biased stretch (acidic residues) spans 606-619 (SDDEDEGADDEDSA). A compositionally biased stretch (low complexity) spans 620–629 (EGSADQMLVF).

Interacts (in heparan sulfate-bound form) with wg. Post-translationally, contains heparan sulfate O-linked oligosaccharides. In the wing disk, detected throughout the disk where it is localized primarily to the apical surface but is also present at the basal surface (at protein level).

It is found in the secreted. In terms of biological role, binds to the Wnt signaling protein wg, stabilizes it and promotes its extracellular distribution. This is required for establishment of a wg gradient during development to allow for regulation of target genes at different levels. The protein is Proteoglycan Cow of Drosophila melanogaster (Fruit fly).